Here is a 47-residue protein sequence, read N- to C-terminus: UPF0391 membrane protein rrnAC2507 (47 aa).

2 helical membrane passes run 5–25 and 27–47; these read VVLV…IAGL and FRVA…TFLL.

The protein belongs to the UPF0391 family.

The protein resides in the cell membrane. The chain is UPF0391 membrane protein rrnAC2507 from Haloarcula marismortui (strain ATCC 43049 / DSM 3752 / JCM 8966 / VKM B-1809) (Halobacterium marismortui).